A 376-amino-acid polypeptide reads, in one-letter code: Serine/threonine-protein kinase-transforming protein mos (376 aa).

Residues 94–376 (VCLMHRLGSG…KALADSIEPM (283 aa)) enclose the Protein kinase domain. Residues 100–108 (LGSGGFGSV) and K121 contribute to the ATP site. D229 acts as the Proton acceptor in catalysis.

This sequence belongs to the protein kinase superfamily. Ser/Thr protein kinase family.

The catalysed reaction is L-seryl-[protein] + ATP = O-phospho-L-seryl-[protein] + ADP + H(+). It catalyses the reaction L-threonyl-[protein] + ATP = O-phospho-L-threonyl-[protein] + ADP + H(+). The protein is Serine/threonine-protein kinase-transforming protein mos (V-MOS) of Moloney murine sarcoma virus (strain m1) (MoMSV).